A 75-amino-acid chain; its full sequence is MARYFRRRKFCRFTSEGVVEIDYKDIVTLKNYITESGKIVPSRITGTSARYQRQLARAIKRARYLSLLPYTDLHQ.

It belongs to the bacterial ribosomal protein bS18 family. In terms of assembly, part of the 30S ribosomal subunit. Forms a tight heterodimer with protein bS6.

Its function is as follows. Binds as a heterodimer with protein bS6 to the central domain of the 16S rRNA, where it helps stabilize the platform of the 30S subunit. This Shewanella frigidimarina (strain NCIMB 400) protein is Small ribosomal subunit protein bS18.